We begin with the raw amino-acid sequence, 679 residues long: MSKQDLLLEIGLEEMPARFLNESMVQLGDKLTGWLKEKNITHGEVKLFNTPRRLAVFVKDVAEKQDDIKEEAKGPAKKIALDADGNWTKAAIGFSKGQGANVEDLYIKEVKGIEYVFVQKFQAGQETKSLLPELSGLITSLHFPKNMRWGNEDLRYIRPIKWIVALFGQDVIPFSITNVESGRTTQGHRFLGHEVSIESPSAYEEQLKGQHVIADPSVRKQMIQSQLETMAAENNWSIPVDEDLLDEVNHLVEYPTALYGSFESEFLSIPEEVLVTTMKEHQRYFPVKDKNGDLLPHFITVRNGNSHAIENVARGNEKVLRARLSDASFFYKEDQKLNIDANVKKLENIVFHEELGSLADKVRRVTSIAEKLAVRLQADEDTLKHVKRAAEISKFDLVTHMIYEFPELQGIMGEKYARMLGEDEAVAAAVNEHYMPRSAGGETPSTFTGAVVAMADKLDTIASFFSIGVIPTGSQDPYGLRRQASGIVAILLDRNWGISFEELLTFVQTDKENELLDFFTQRLKYVLNAEQIRHDVIDAVLESSELEPYSALHKAQVLEQKLGAPGFKETAEALGRVISISKKGVRGDIQPDLFENEYEAKLFDAYQTAKQNLQENFSKKDYEAALASLAALKEPIDAYFDHTMVIADNESLKANRLAQMVSLADEIKSFANMNALIVK.

Belongs to the class-II aminoacyl-tRNA synthetase family. In terms of assembly, tetramer of two alpha and two beta subunits.

The protein localises to the cytoplasm. The enzyme catalyses tRNA(Gly) + glycine + ATP = glycyl-tRNA(Gly) + AMP + diphosphate. The sequence is that of Glycine--tRNA ligase beta subunit (glyS) from Bacillus subtilis (strain 168).